We begin with the raw amino-acid sequence, 410 residues long: D-3-phosphoglycerate dehydrogenase (410 aa).

NAD(+) is bound by residues 161-162 (HI), D181, 238-240 (ASR), and D264. R240 is an active-site residue. Residue E269 is part of the active site. Catalysis depends on H292, which acts as the Proton donor. Residue 292-295 (HIGG) participates in NAD(+) binding. One can recognise an ACT domain in the interval 339-410 (RLMHIHENRP…PGTIRARLLY (72 aa)).

Belongs to the D-isomer specific 2-hydroxyacid dehydrogenase family. Homotetramer.

It catalyses the reaction (2R)-3-phosphoglycerate + NAD(+) = 3-phosphooxypyruvate + NADH + H(+). It carries out the reaction (R)-2-hydroxyglutarate + NAD(+) = 2-oxoglutarate + NADH + H(+). Its pathway is amino-acid biosynthesis; L-serine biosynthesis; L-serine from 3-phospho-D-glycerate: step 1/3. With respect to regulation, in bacteria displays feedback inhibition by L-serine. Functionally, catalyzes the reversible oxidation of 3-phospho-D-glycerate to 3-phosphonooxypyruvate, the first step of the phosphorylated L-serine biosynthesis pathway. Also catalyzes the reversible oxidation of 2-hydroxyglutarate to 2-oxoglutarate. This Escherichia coli O6:H1 (strain CFT073 / ATCC 700928 / UPEC) protein is D-3-phosphoglycerate dehydrogenase (serA).